We begin with the raw amino-acid sequence, 179 residues long: Large ribosomal subunit protein uL5 (179 aa).

This sequence belongs to the universal ribosomal protein uL5 family. Part of the 50S ribosomal subunit; part of the 5S rRNA/L5/L18/L25 subcomplex. Contacts the 5S rRNA and the P site tRNA. Forms a bridge to the 30S subunit in the 70S ribosome.

This is one of the proteins that bind and probably mediate the attachment of the 5S RNA into the large ribosomal subunit, where it forms part of the central protuberance. In the 70S ribosome it contacts protein S13 of the 30S subunit (bridge B1b), connecting the 2 subunits; this bridge is implicated in subunit movement. Contacts the P site tRNA; the 5S rRNA and some of its associated proteins might help stabilize positioning of ribosome-bound tRNAs. This chain is Large ribosomal subunit protein uL5, found in Thiobacillus denitrificans (strain ATCC 25259 / T1).